We begin with the raw amino-acid sequence, 233 residues long: Ribonuclease 3 (233 aa).

The RNase III domain maps to 4 to 126; that stretch reads LNKLMERLGH…IVGAIYIDAG (123 aa). Position 39 (glutamate 39) interacts with Mg(2+). Aspartate 43 is a catalytic residue. Aspartate 112 and glutamate 115 together coordinate Mg(2+). Glutamate 115 is a catalytic residue. The region spanning 153-222 is the DRBM domain; that stretch reads DAKSLLQEWL…AKRFLELLDD (70 aa).

This sequence belongs to the ribonuclease III family. As to quaternary structure, homodimer. The cofactor is Mg(2+).

It localises to the cytoplasm. It catalyses the reaction Endonucleolytic cleavage to 5'-phosphomonoester.. Functionally, digests double-stranded RNA. Involved in the processing of primary rRNA transcript to yield the immediate precursors to the large and small rRNAs (23S and 16S). Processes some mRNAs, and tRNAs when they are encoded in the rRNA operon. Processes pre-crRNA and tracrRNA of type II CRISPR loci if present in the organism. The sequence is that of Ribonuclease 3 from Coxiella burnetii (strain RSA 331 / Henzerling II).